We begin with the raw amino-acid sequence, 231 residues long: MTHVGKRVVKNREGIDRVKLYPVDEAVKLIKERANAKFDETVEIAMNLGVDPKHADQMVRGVVNLPNGTGRTLRVAVFARGAKADEALAAGADIVGAEDLVATVQGGTIAFDRCIATPDMMPLVGRLGKVLGPRGLMPNPKVGTVTMDVAGAVKASKGGAVEFRVEKAGIIQGSVGKASFETEKLLENIAAFVDAVAKAKPQGAKGTYIQRVALSSTMGPGVKIDPATVTA.

Belongs to the universal ribosomal protein uL1 family. Part of the 50S ribosomal subunit.

Its function is as follows. Binds directly to 23S rRNA. The L1 stalk is quite mobile in the ribosome, and is involved in E site tRNA release. Functionally, protein L1 is also a translational repressor protein, it controls the translation of the L11 operon by binding to its mRNA. The protein is Large ribosomal subunit protein uL1 of Beijerinckia indica subsp. indica (strain ATCC 9039 / DSM 1715 / NCIMB 8712).